Consider the following 1008-residue polypeptide: Kinesin-like protein KIN-5C (1008 aa).

The Kinesin motor domain maps to 12-359 (NVQVLLRCRP…LDYAHRAKSI (348 aa)). An ATP-binding site is contributed by 98-105 (GQTGTGKT). The stretch at 402–459 (KDRYQQEENERKAMADQIEQMTTSLEANQKQINDLQEKYDSELQHSADLSKKLEATEK) forms a coiled coil. Disordered stretches follow at residues 910–931 (VEAH…TAGI), 943–962 (YKDY…EVPS), and 975–1008 (ESLM…TINN). Positions 913-925 (HLGESQHLQESHS) are enriched in basic and acidic residues. A compositionally biased stretch (basic and acidic residues) spans 979 to 995 (DEFRENHPYEPSKDRRP).

This sequence belongs to the TRAFAC class myosin-kinesin ATPase superfamily. Kinesin family. KIN-5/BimC subfamily.

It localises to the cytoplasm. Its subcellular location is the cytoskeleton. The protein resides in the spindle. Responsible for microtubule translocation. May be important for the organization of phragmoplast-specific arrays of microtubules. Plays an essential role in stabilizing the mitotic spindle. Required during mitotic cytokinesis. The protein is Kinesin-like protein KIN-5C of Oryza sativa subsp. japonica (Rice).